Reading from the N-terminus, the 324-residue chain is Phospho-N-acetylmuramoyl-pentapeptide-transferase (324 aa).

9 helical membrane passes run 13-33, 59-79, 85-105, 121-141, 143-163, 179-199, 201-221, 243-263, and 303-323; these read VLSA…IFIP, PTMG…IIGY, GMVV…DDIL, MILL…NIGT, IIIP…PLVV, IDGL…IVGF, TGHY…LGFL, AIAT…VGGI, and VKLV…GFIA.

Belongs to the glycosyltransferase 4 family. MraY subfamily. It depends on Mg(2+) as a cofactor.

It is found in the cell membrane. It carries out the reaction UDP-N-acetyl-alpha-D-muramoyl-L-alanyl-gamma-D-glutamyl-meso-2,6-diaminopimeloyl-D-alanyl-D-alanine + di-trans,octa-cis-undecaprenyl phosphate = di-trans,octa-cis-undecaprenyl diphospho-N-acetyl-alpha-D-muramoyl-L-alanyl-D-glutamyl-meso-2,6-diaminopimeloyl-D-alanyl-D-alanine + UMP. The protein operates within cell wall biogenesis; peptidoglycan biosynthesis. Functionally, catalyzes the initial step of the lipid cycle reactions in the biosynthesis of the cell wall peptidoglycan: transfers peptidoglycan precursor phospho-MurNAc-pentapeptide from UDP-MurNAc-pentapeptide onto the lipid carrier undecaprenyl phosphate, yielding undecaprenyl-pyrophosphoryl-MurNAc-pentapeptide, known as lipid I. In Clostridium botulinum (strain Alaska E43 / Type E3), this protein is Phospho-N-acetylmuramoyl-pentapeptide-transferase.